A 482-amino-acid polypeptide reads, in one-letter code: Scarecrow-like protein 3 (482 aa).

One can recognise a GRAS domain in the interval 45-479 (LKPEERGLYL…RPLYSVSAWR (435 aa)). Positions 52 to 115 (LYLIHLLLTC…ILKSWPGLYK (64 aa)) are leucine repeat I (LRI). The tract at residues 134–199 (RRLFFEMFPI…EGPPHLRITG (66 aa)) is VHIID. Residues 165–169 (VHVID) carry the VHIID motif. The tract at residues 209–241 (QMAHRLIEEAEKLDIPFQFNPVVSRLDCLNVEQ) is leucine repeat II (LRII). The segment at 250 to 401 (LAVSSVLQLH…KMLFGEEIKN (152 aa)) is PFYRE. Residues 302–324 (ENDMSNNNGYSPSGDSASSLPLP) are disordered. Positions 305–324 (MSNNNGYSPSGDSASSLPLP) are enriched in polar residues. The interval 404-479 (SCEGFERRER…RPLYSVSAWR (76 aa)) is SAW.

Belongs to the GRAS family. In terms of assembly, binds to zinc finger proteins MGP/IDD3, IDD4, IDD5, BIB/IDD9 and JKD/IDD10. As to expression, expressed in seedlings, root epidermis, leaves, flowers and siliques.

The protein localises to the nucleus. Probable transcription factor involved in plant development. This chain is Scarecrow-like protein 3, found in Arabidopsis thaliana (Mouse-ear cress).